Here is a 399-residue protein sequence, read N- to C-terminus: Na(+)/H(+) antiporter NhaA (399 aa).

Transmembrane regions (helical) follow at residues 14 to 34 (AGGI…NSPL), 59 to 79 (LIHW…GLEV), 95 to 115 (SLPT…YLLF), 124 to 144 (AGWA…MALL), 154 to 174 (VFLL…IAMF), 177 to 197 (TDLS…LVGL), 213 to 233 (LILW…GVII), 261 to 281 (FIIL…PMSF), 290 to 310 (VGIA…FSYI), 331 to 351 (VALM…LAFV), and 363 to 383 (LGIL…LAKV).

The protein belongs to the NhaA Na(+)/H(+) (TC 2.A.33) antiporter family.

Its subcellular location is the cell inner membrane. It catalyses the reaction Na(+)(in) + 2 H(+)(out) = Na(+)(out) + 2 H(+)(in). Na(+)/H(+) antiporter that extrudes sodium in exchange for external protons. The sequence is that of Na(+)/H(+) antiporter NhaA from Shewanella sediminis (strain HAW-EB3).